The chain runs to 189 residues: T-cell surface glycoprotein CD3 epsilon chain (189 aa).

A signal peptide spans 1–21 (MRWNTFWGILCLSLLAVGTCQ). In terms of domain architecture, Ig-like spans 23–99 (DAENIEYKVS…KNTYLYLKAR (77 aa)). The Extracellular segment spans residues 23-108 (DAENIEYKVS…RVCEYCVEVD (86 aa)). A disulfide bridge links Cys-42 with Cys-83. The chain crosses the membrane as a helical span at residues 109–134 (LTAVAIIIIVDICITLGLLMVIYYWS). The Cytoplasmic segment spans residues 135 to 189 (KNRKAKAKPVTRGTGAGSRPRGQNKERPPPVPNPDYEPIRKGQRDLYSGLNQRAV). A disordered region spans residues 143-189 (PVTRGTGAGSRPRGQNKERPPPVPNPDYEPIRKGQRDLYSGLNQRAV). The tract at residues 157–174 (QNKERPPPVPNPDYEPIR) is NUMB-binding region. The ITAM domain maps to 160–187 (ERPPPVPNPDYEPIRKGQRDLYSGLNQR). The interval 161–168 (RPPPVPNP) is proline-rich sequence. Tyr-170 and Tyr-181 each carry phosphotyrosine.

As to quaternary structure, the TCR-CD3 complex is composed of a CD3D/CD3E and a CD3G/CD3E heterodimers that preferentially associate with TCRalpha and TCRbeta, respectively, to form TCRalpha/CD3E/CD3G and TCRbeta/CD3G/CD3E trimers. In turn, the hexamer interacts with CD3Z homodimer to form the TCR-CD3 complex. Alternatively, TCRalpha and TCRbeta can be replaced by TCRgamma and TCRdelta. Interacts with CD6. Interacts (via Proline-rich sequence) with NCK1; the interaction is ligand dependent but independent of tyrosine kinase activation. In terms of processing, phosphorylated on Tyr residues after T-cell receptor triggering by LCK in association with CD4/CD8.

Its subcellular location is the cell membrane. Part of the TCR-CD3 complex present on T-lymphocyte cell surface that plays an essential role in adaptive immune response. When antigen presenting cells (APCs) activate T-cell receptor (TCR), TCR-mediated signals are transmitted across the cell membrane by the CD3 chains CD3D, CD3E, CD3G and CD3Z. All CD3 chains contain immunoreceptor tyrosine-based activation motifs (ITAMs) in their cytoplasmic domain. Upon TCR engagement, these motifs become phosphorylated by Src family protein tyrosine kinases LCK and FYN, resulting in the activation of downstream signaling pathways. In addition of this role of signal transduction in T-cell activation, CD3E plays an essential role in correct T-cell development. Also participates in internalization and cell surface down-regulation of TCR-CD3 complexes via endocytosis sequences present in CD3E cytosolic region. In addition to its role as a TCR coreceptor, it serves as a receptor for ITPRIPL1. Ligand recognition inhibits T-cell activation by promoting interaction with NCK1, which prevents CD3E-ZAP70 interaction and blocks the ERK-NFkB signaling cascade and calcium influx. The sequence is that of T-cell surface glycoprotein CD3 epsilon chain (Cd3e) from Mus musculus (Mouse).